We begin with the raw amino-acid sequence, 600 residues long: RNA-binding protein 47 (600 aa).

Residues 1-25 are compositionally biased toward low complexity; the sequence is MTAEDSASAVAMSNPSPSSSSKSSS. Residues 1-37 are disordered; sequence MTAEDSASAVAMSNPSPSSSSKSSSGHPQHHCTVPEG. RRM domains lie at 82–160, 162–244, and 257–329; these read CEIF…SSVD, CRLF…WAEP, and KILY…LAKP.

Belongs to the RRM RBM47 family. Homodimer. May interact with MAVS; may regulate MAVS lysosomal degradation.

It is found in the nucleus. The protein resides in the cytoplasm. Single-stranded RNA-binding protein that functions in a variety of RNA processes, including alternative splicing, RNA stabilization, and RNA editing. Independently of its RNA-binding activity, could negatively regulate MAVS by promoting its lysosomal degradation. The polypeptide is RNA-binding protein 47 (rbm47) (Danio rerio (Zebrafish)).